A 109-amino-acid polypeptide reads, in one-letter code: Ferredoxin (109 aa).

4Fe-4S ferredoxin-type domains follow at residues 2-30 and 31-60; these read TYVVTDECVKCKYTDCVEVCPVDCFYEGE and FMLVINPDECIDCGVCVPDCPIDAIKPESP. The [3Fe-4S] cluster site is built by C9 and C17. [4Fe-4S] cluster-binding residues include C21, C40, C43, and C46. C50 provides a ligand contact to [3Fe-4S] cluster.

The cofactor is [4Fe-4S] cluster. It depends on [3Fe-4S] cluster as a cofactor.

In terms of biological role, ferredoxins are iron-sulfur proteins that transfer electrons in a wide variety of metabolic reactions. The sequence is that of Ferredoxin (fdxA) from Rickettsia prowazekii (strain Madrid E).